The chain runs to 270 residues: Probable septum site-determining protein MinC (270 aa).

The segment at 105–129 is disordered; it reads DRRAPSSKAADEAPVQQAEPAAPAA. Low complexity predominate over residues 116 to 129; sequence EAPVQQAEPAAPAA.

The protein belongs to the MinC family. As to quaternary structure, interacts with MinD and FtsZ.

Cell division inhibitor that blocks the formation of polar Z ring septums. Rapidly oscillates between the poles of the cell to destabilize FtsZ filaments that have formed before they mature into polar Z rings. Prevents FtsZ polymerization. The sequence is that of Probable septum site-determining protein MinC from Burkholderia mallei (strain NCTC 10247).